The following is a 438-amino-acid chain: Adenosylhomocysteinase (438 aa).

The substrate site is built by threonine 64, aspartate 139, and glutamate 164. 165-167 (TTT) lines the NAD(+) pocket. Substrate contacts are provided by lysine 194 and aspartate 198. Residues asparagine 199, 228–233 (GYGDVG), glutamate 251, asparagine 286, 307–309 (IGH), and asparagine 352 contribute to the NAD(+) site.

Belongs to the adenosylhomocysteinase family. Requires NAD(+) as cofactor.

It is found in the cytoplasm. It carries out the reaction S-adenosyl-L-homocysteine + H2O = L-homocysteine + adenosine. It functions in the pathway amino-acid biosynthesis; L-homocysteine biosynthesis; L-homocysteine from S-adenosyl-L-homocysteine: step 1/1. May play a key role in the regulation of the intracellular concentration of adenosylhomocysteine. This chain is Adenosylhomocysteinase, found in Coxiella burnetii (strain Dugway 5J108-111).